A 354-amino-acid chain; its full sequence is Membrane progestin receptor beta (354 aa).

Residues 1–75 (MTTAILERLS…FFSLFQKHNE (75 aa)) are Cytoplasmic-facing. The helical transmembrane segment at 76 to 96 (VVNVWTHLLAALAVLLRFWAF) threads the bilayer. The Extracellular segment spans residues 97–111 (AEAEALPWASTHSLP). The helical transmembrane segment at 112–132 (LLLFILSSITYLTCSLLAHLL) threads the bilayer. Topologically, residues 133–174 (QSKSELSHYTFYFVDYVGVSVYQYGSALAHFFYSSDQAWYDR) are cytoplasmic. A helical membrane pass occupies residues 175–195 (FWLFFLPAAAFCGWLSCAGCC). Topologically, residues 196-213 (YAKYRYRRPYPVMRKICQ) are extracellular. The helical transmembrane segment at 214-234 (VVPAGLAFILDISPVAHRVAL) threads the bilayer. At 235–243 (CHLAGCQEQ) the chain is on the cytoplasmic side. A helical membrane pass occupies residues 244–264 (AAWYHTLQILFFLVSAYFFSC). Over 265–283 (PVPEKYFPGSCDIVGHGHQ) the chain is Extracellular. Residues 284–304 (IFHAFLSICTLSQLEAILLDY) traverse the membrane as a helical segment. Residues 305 to 319 (QGRQEIFLQRHGPLS) are Cytoplasmic-facing. The chain crosses the membrane as a helical span at residues 320–340 (VHMACLSFFFLAACSAATAAL). Topologically, residues 341–354 (LRHKVKARLTKKDS) are extracellular.

It belongs to the ADIPOR family. As to expression, highly expressed in the hypothalamus. Also expressed in spinal cord, kidney and testis.

It is found in the cell membrane. Functionally, plasma membrane progesterone (P4) receptor coupled to G proteins. Seems to act through a G(i) mediated pathway. May be involved in oocyte maturation. Also binds dehydroepiandrosterone (DHEA), pregnanolone, pregnenolone and allopregnanolone. The sequence is that of Membrane progestin receptor beta from Homo sapiens (Human).